The chain runs to 438 residues: Methylenetetrahydrofolate--tRNA-(uracil-5-)-methyltransferase TrmFO (438 aa).

9 to 14 provides a ligand contact to FAD; it reads GAGLAG.

The protein belongs to the MnmG family. TrmFO subfamily. The cofactor is FAD.

It is found in the cytoplasm. The catalysed reaction is uridine(54) in tRNA + (6R)-5,10-methylene-5,6,7,8-tetrahydrofolate + NADH + H(+) = 5-methyluridine(54) in tRNA + (6S)-5,6,7,8-tetrahydrofolate + NAD(+). It carries out the reaction uridine(54) in tRNA + (6R)-5,10-methylene-5,6,7,8-tetrahydrofolate + NADPH + H(+) = 5-methyluridine(54) in tRNA + (6S)-5,6,7,8-tetrahydrofolate + NADP(+). Functionally, catalyzes the folate-dependent formation of 5-methyl-uridine at position 54 (M-5-U54) in all tRNAs. The sequence is that of Methylenetetrahydrofolate--tRNA-(uracil-5-)-methyltransferase TrmFO from Lactobacillus acidophilus (strain ATCC 700396 / NCK56 / N2 / NCFM).